The sequence spans 344 residues: Arginine N-succinyltransferase (344 aa).

Residue Leu125 coordinates succinyl-CoA. The active-site Proton donor is the His229.

It belongs to the arginine N-succinyltransferase family.

It carries out the reaction succinyl-CoA + L-arginine = N(2)-succinyl-L-arginine + CoA + H(+). It participates in amino-acid degradation; L-arginine degradation via AST pathway; L-glutamate and succinate from L-arginine: step 1/5. Functionally, catalyzes the transfer of succinyl-CoA to arginine to produce N(2)-succinylarginine. The sequence is that of Arginine N-succinyltransferase from Shigella flexneri.